The primary structure comprises 186 residues: Myosin light chain 1, skeletal muscle isoform (186 aa).

A Blocked amino end (Met) modification is found at M1. The segment at 1 to 26 (MPKAPAKKAEPAPAPAPAPEPAPAPA) is disordered. Residues 12–26 (APAPAPAPEPAPAPA) are compositionally biased toward pro residues. EF-hand domains are found at residues 42-77 (DQIE…LGQN) and 119-154 (AGFE…LGEK).

In terms of assembly, myosin is a hexamer of 2 heavy chains and 4 light chains.

This is Myosin light chain 1, skeletal muscle isoform from Chelon ramada (Thin-lipped grey mullet).